Here is a 355-residue protein sequence, read N- to C-terminus: C-C chemokine receptor type 1 (355 aa).

Residues 1–34 lie on the Extracellular side of the membrane; that stretch reads METPNTTEDYDTTTEFDYGDATPCQKVNERAFGA. N5 carries an N-linked (GlcNAc...) asparagine glycan. 2 disulfides stabilise this stretch: C24–C273 and C106–C183. The helical transmembrane segment at 35–60 threads the bilayer; it reads QLLPPLYSLVFVIGLVGNILVVLVLV. The Cytoplasmic portion of the chain corresponds to 61–64; that stretch reads QYKR. A helical membrane pass occupies residues 65-91; sequence LKNMTSIYLLNLAISDLLFLFTLPFWI. Over 92-107 the chain is Extracellular; that stretch reads DYKLKDDWVFGDAMCK. Residues 108–129 traverse the membrane as a helical segment; that stretch reads ILSGFYYTGLYSEIFFIILLTI. Topologically, residues 130–146 are cytoplasmic; sequence DRYLAIVHAVFALRART. The helical transmembrane segment at 147 to 171 threads the bilayer; the sequence is VTFGVITSIIIWALAILASMPGLYF. At 172 to 197 the chain is on the extracellular side; sequence SKTQWEFTHHTCSLHFPHESLREWKL. A helical membrane pass occupies residues 198-223; sequence FQALKLNLFGLVLPLLVMIICYTGII. At 224–239 the chain is on the cytoplasmic side; that stretch reads KILLRRPNEKKSKAVR. Residues 240–264 form a helical membrane-spanning segment; the sequence is LIFVIMIIFFLFWTPYNLTILISVF. Residues 265-281 are Extracellular-facing; that stretch reads QDFLFTHECEQSRHLDL. Residues 282-305 traverse the membrane as a helical segment; the sequence is AVQVTEVIAYTHCCVNPVIYAFVG. Topologically, residues 306–355 are cytoplasmic; sequence ERFRKYLRQLFHRRVAVHLVKWLPFLSVDRLERVSSTSPSTGEHELSAGF.

It belongs to the G-protein coupled receptor 1 family. In terms of assembly, interacts with CREB3. Interacts with CCL3. Interacts with CCL15. Interacts with CCL23. Interacts with GNAI1. Interacts with PF4/CXCL4. Widely expressed in different hematopoietic cells.

The protein resides in the cell membrane. In terms of biological role, chemokine receptor that plays a crucial role in regulating immune cell migration, inflammation, and immune responses. Contributes to the inflammatory response by recruiting immune cells, such as monocytes, macrophages, T-cells, and dendritic cells, to sites of inflammation for the clearance of pathogens and the resolution of tissue damage. When activated by its ligands including CCL3, CCL5-9, CCL13-16 and CCL23, triggers a signaling cascade within immune cells, leading to their migration towards the source of the chemokine. For example, mediates neutrophil migration after activation by CCL3 leading to the sequential release of TNF-alpha and leukotriene B4. Also mediates monocyte migration upon CXCL4 binding. Activation by CCL5 results in neuroinflammation through the ERK1/2 signaling pathway. The sequence is that of C-C chemokine receptor type 1 (CCR1) from Homo sapiens (Human).